A 416-amino-acid polypeptide reads, in one-letter code: Orexin/Hypocretin receptor type 1 (416 aa).

Residues 1 to 22 (MEPSATPGAQPGVPTSSGEPFH) are disordered. Topologically, residues 1-46 (MEPSATPGAQPGVPTSSGEPFHLPPDYEDEFLRYLWRDYLYPKQYE) are extracellular. The segment at 26 to 41 (DYEDEFLRYLWRDYLY) is required for response to orexin-A. A helical transmembrane segment spans residues 47-67 (WVLIAAYVAVFLIALVGNTLV). Residues 68-82 (CLAVWRNHHMRTVTN) are Cytoplasmic-facing. The chain crosses the membrane as a helical span at residues 83–105 (YFIVNLSLADVLVTAICLPASLL). The Extracellular segment spans residues 106 to 119 (VDITESWLFGHALC). A disulfide bond links cysteine 119 and cysteine 202. The chain crosses the membrane as a helical span at residues 120–140 (KVIPYLQAVSVSVAVLTLSFI). At 141-160 (ALDRWYAICHPLLFKSTARR) the chain is on the cytoplasmic side. The chain crosses the membrane as a helical span at residues 161 to 182 (ARGSILGIWAVSLAVMVPQAAV). The Extracellular portion of the chain corresponds to 183–213 (MECSSVLPELANRTRLFSVCDERWADELYPK). Asparagine 194 is a glycosylation site (N-linked (GlcNAc...) asparagine). A helical membrane pass occupies residues 214-235 (IYHSCFFFVTYLAPLGLMGMAY). Residues 236–298 (FQIFRKLWGP…QMRARRKTAK (63 aa)) lie on the Cytoplasmic side of the membrane. Residues 299–321 (MLMVVLLVFALCYLPISVLNVLK) form a helical membrane-spanning segment. Topologically, residues 322–336 (RVFGMFRQASDREAV) are extracellular. A helical transmembrane segment spans residues 337-360 (YACFTFSHWLVYANSAANPIIYNF). The Cytoplasmic portion of the chain corresponds to 361–416 (LSGKFREQFKAAFSCCLPGLGPSSSARHKSLSLQSRCSVSKVSEHVVLTTVTTVLS).

The protein belongs to the G-protein coupled receptor 1 family. As to expression, highly expressed in the brain in the prefrontal cortex, hippocampus, paraventricular thalamus, ventromedial hypothalamus, arcuate nucleus, dorsal raphe nucleus, and locus coeruleus. Not detected in the spleen, lung, liver, skeletal muscle, kidney and testis. Orexin receptor mRNA expression has also been reported in the adrenal gland, enteric nervous system, and pancreas.

It localises to the cell membrane. Moderately selective excitatory receptor for orexin-A and, with a lower affinity, for orexin-B neuropeptide. Triggers an increase in cytoplasmic Ca(2+) levels in response to orexin-A binding. The protein is Orexin/Hypocretin receptor type 1 of Rattus norvegicus (Rat).